Reading from the N-terminus, the 353-residue chain is Ribosomal RNA small subunit methyltransferase C (353 aa).

This sequence belongs to the methyltransferase superfamily. RsmC family. As to quaternary structure, monomer.

The protein resides in the cytoplasm. The enzyme catalyses guanosine(1207) in 16S rRNA + S-adenosyl-L-methionine = N(2)-methylguanosine(1207) in 16S rRNA + S-adenosyl-L-homocysteine + H(+). Functionally, specifically methylates the guanine in position 1207 of 16S rRNA in the 30S particle. The protein is Ribosomal RNA small subunit methyltransferase C of Marinomonas sp. (strain MWYL1).